Consider the following 277-residue polypeptide: 3-methyl-2-oxobutanoate hydroxymethyltransferase (277 aa).

Mg(2+)-binding residues include D49 and D88. 3-methyl-2-oxobutanoate is bound by residues 49–50 (DS), D88, and K118. A Mg(2+)-binding site is contributed by E120. E186 serves as the catalytic Proton acceptor.

This sequence belongs to the PanB family. Homodecamer; pentamer of dimers. The cofactor is Mg(2+).

It localises to the cytoplasm. It catalyses the reaction 3-methyl-2-oxobutanoate + (6R)-5,10-methylene-5,6,7,8-tetrahydrofolate + H2O = 2-dehydropantoate + (6S)-5,6,7,8-tetrahydrofolate. Its pathway is cofactor biosynthesis; (R)-pantothenate biosynthesis; (R)-pantoate from 3-methyl-2-oxobutanoate: step 1/2. Catalyzes the reversible reaction in which hydroxymethyl group from 5,10-methylenetetrahydrofolate is transferred onto alpha-ketoisovalerate to form ketopantoate. The chain is 3-methyl-2-oxobutanoate hydroxymethyltransferase from Cereibacter sphaeroides (strain ATCC 17025 / ATH 2.4.3) (Rhodobacter sphaeroides).